Consider the following 791-residue polypeptide: Ribosome biogenesis protein ERB1 (791 aa).

Residues 1-12 (MARKNSSLNGSE) show a composition bias toward polar residues. Disordered stretches follow at residues 1–60 (MARK…DDSD) and 68–87 (AEEE…SEEG). Acidic residues-rich tracts occupy residues 25–60 (ESEL…DDSD) and 69–87 (EEEN…SEEG). The interval 254-372 (RFVPSKHEAK…LRKVPGYSES (119 aa)) is required for interaction with NOP7. A required for interaction with YTM1 region spans residues 372 to 408 (SVRERFERSLDLYLAPRVRKNKLNIDPESLIPELPST). 7 WD repeats span residues 424-463 (GHKG…EVYQ), 472-512 (NNDD…FEIE), 576-618 (TCRK…TQSP), 621-659 (KSKG…LIKK), 662-701 (PGAR…TPYK), 705-744 (YHEK…DLMK), and 760-791 (VNSL…LWTT).

It belongs to the WD repeat BOP1/ERB1 family. Component of the NOP7 complex, composed of ERB1, NOP7 and YTM1. The complex is held together by ERB1, which interacts with NOP7 via its N-terminal domain and with YTM1 via a high-affinity interaction between the seven-bladed beta-propeller domains of the 2 proteins. The NOP7 complex associates with the 66S pre-ribosome.

The protein localises to the nucleus. The protein resides in the nucleolus. Its subcellular location is the nucleoplasm. In terms of biological role, component of the NOP7 complex, which is required for maturation of the 25S and 5.8S ribosomal RNAs and formation of the 60S ribosome. The protein is Ribosome biogenesis protein ERB1 of Kluyveromyces lactis (strain ATCC 8585 / CBS 2359 / DSM 70799 / NBRC 1267 / NRRL Y-1140 / WM37) (Yeast).